Consider the following 502-residue polypeptide: 9-beta-pimara-7,15-diene oxidase (502 aa).

2 helical membrane-spanning segments follow: residues 4–26 (INSE…ALLT) and 106–128 (LLVS…GAYW). Cys438 serves as a coordination point for heme.

Belongs to the cytochrome P450 family. Heme is required as a cofactor.

It localises to the membrane. It carries out the reaction 9beta-pimara-7,15-diene + 3 reduced [NADPH--hemoprotein reductase] + 3 O2 = 9beta-pimara-7,15-dien-19-oate + 3 oxidized [NADPH--hemoprotein reductase] + 4 H2O + 4 H(+). Involved in momilactone phytoalexins biosynthesis; acts as a multifunctional diterpene oxidase. Participates in the biosynthetic steps between 9-beta-pimara-7,15-diene and 3-beta-hydroxy-9-beta-pimara-7,15-dien-19,6-beta-olide. Also catalyzes consecutive oxidations at C19 of syn-stemod-13(17)-ene. The polypeptide is 9-beta-pimara-7,15-diene oxidase (CYP99A3) (Oryza sativa subsp. japonica (Rice)).